The sequence spans 212 residues: Pyridoxine/pyridoxamine 5'-phosphate oxidase (212 aa).

Substrate is bound by residues 8–11 (RRNY) and K66. Residues 61 to 66 (RIVLLK), 76 to 77 (FT), R82, K83, and Q105 contribute to the FMN site. 3 residues coordinate substrate: Y123, R127, and S131. Residues 140-141 (QS) and W184 each bind FMN. 190–192 (RLH) serves as a coordination point for substrate. R194 provides a ligand contact to FMN.

It belongs to the pyridoxamine 5'-phosphate oxidase family. As to quaternary structure, homodimer. It depends on FMN as a cofactor.

It carries out the reaction pyridoxamine 5'-phosphate + O2 + H2O = pyridoxal 5'-phosphate + H2O2 + NH4(+). The catalysed reaction is pyridoxine 5'-phosphate + O2 = pyridoxal 5'-phosphate + H2O2. Its pathway is cofactor metabolism; pyridoxal 5'-phosphate salvage; pyridoxal 5'-phosphate from pyridoxamine 5'-phosphate: step 1/1. The protein operates within cofactor metabolism; pyridoxal 5'-phosphate salvage; pyridoxal 5'-phosphate from pyridoxine 5'-phosphate: step 1/1. In terms of biological role, catalyzes the oxidation of either pyridoxine 5'-phosphate (PNP) or pyridoxamine 5'-phosphate (PMP) into pyridoxal 5'-phosphate (PLP). This chain is Pyridoxine/pyridoxamine 5'-phosphate oxidase, found in Cupriavidus metallidurans (strain ATCC 43123 / DSM 2839 / NBRC 102507 / CH34) (Ralstonia metallidurans).